Reading from the N-terminus, the 386-residue chain is Glucose-1-phosphate adenylyltransferase (386 aa).

Residues Y100, G165, 180 to 181 (EK), and S191 contribute to the alpha-D-glucose 1-phosphate site.

It belongs to the bacterial/plant glucose-1-phosphate adenylyltransferase family. As to quaternary structure, homotetramer.

The catalysed reaction is alpha-D-glucose 1-phosphate + ATP + H(+) = ADP-alpha-D-glucose + diphosphate. It participates in glycan biosynthesis; glycogen biosynthesis. Involved in the biosynthesis of ADP-glucose, a building block required for the elongation reactions to produce glycogen. Catalyzes the reaction between ATP and alpha-D-glucose 1-phosphate (G1P) to produce pyrophosphate and ADP-Glc. This chain is Glucose-1-phosphate adenylyltransferase, found in Clostridium beijerinckii (strain ATCC 51743 / NCIMB 8052) (Clostridium acetobutylicum).